The primary structure comprises 396 residues: Aldo-keto reductase ausK (396 aa).

Aspartate 76 serves as a coordination point for NADP(+). The Proton donor role is filled by tyrosine 81. Substrate is bound at residue histidine 156. NADP(+)-binding positions include 186–187 (CN), glutamine 212, 241–251 (DALGSGKFQSR), and 317–325 (RKIQHLHDN).

It belongs to the aldo/keto reductase family. Aldo/keto reductase 2 subfamily. In terms of assembly, homodimer.

It participates in secondary metabolite biosynthesis; terpenoid biosynthesis. Its function is as follows. Aldo-keto reductase; part of the gene cluster that mediates the biosynthesis of calidodehydroaustin, a fungal meroterpenoid. The first step of the pathway is the synthesis of 3,5-dimethylorsellinic acid by the polyketide synthase ausA. 3,5-dimethylorsellinic acid is then prenylated by the polyprenyl transferase ausN. Further epoxidation by the FAD-dependent monooxygenase ausM and cyclization by the probable terpene cyclase ausL lead to the formation of protoaustinoid A. Protoaustinoid A is then oxidized to spiro-lactone preaustinoid A3 by the combined action of the FAD-binding monooxygenases ausB and ausC, and the dioxygenase ausE. Acid-catalyzed keto-rearrangement and ring contraction of the tetraketide portion of preaustinoid A3 by ausJ lead to the formation of preaustinoid A4. The aldo-keto reductase ausK, with the help of ausH, is involved in the next step by transforming preaustinoid A4 into isoaustinone which is in turn hydroxylated by the P450 monooxygenase ausI to form austinolide. The cytochrome P450 monooxygenase ausG modifies austinolide to austinol. Austinol is further acetylated to austin by the O-acetyltransferase ausP, which spontaneously changes to dehydroaustin. The cytochrome P450 monooxygenase ausR then converts dehydroaustin is into 7-dehydrodehydroaustin. The hydroxylation catalyzed by ausR permits the O-acetyltransferase ausQ to add an additional acetyl group to the molecule, leading to the formation of acetoxydehydroaustin. The short chain dehydrogenase ausT catalyzes the reduction of the double bond present between carbon atoms 1 and 2 to convert 7-dehydrodehydroaustin into 1,2-dihydro-7-hydroxydehydroaustin. AusQ catalyzes not only an acetylation reaction but also the addition of the PKS ausV diketide product to 1,2-dihydro-7-hydroxydehydroaustin, forming precalidodehydroaustin. Finally, the iron/alpha-ketoglutarate-dependent dioxygenase converts precalidodehydroaustin into calidodehydroaustin. The polypeptide is Aldo-keto reductase ausK (Aspergillus calidoustus).